A 393-amino-acid chain; its full sequence is Elongation factor Tu (393 aa).

The region spanning 6–204 is the tr-type G domain; that stretch reads KPHINVGTIG…ALEKIELPMR (199 aa). The G1 stretch occupies residues 15 to 22; it reads GHVDHGKT. Position 15 to 22 (15 to 22) interacts with GTP; that stretch reads GHVDHGKT. T22 is a binding site for Mg(2+). The G2 stretch occupies residues 58-62; it reads GITIS. The tract at residues 79-82 is G3; that stretch reads DCPG. GTP is bound by residues 79-83 and 134-137; these read DCPGH and NKCD. The segment at 134-137 is G4; the sequence is NKCD. The tract at residues 172–174 is G5; the sequence is SAV.

This sequence belongs to the TRAFAC class translation factor GTPase superfamily. Classic translation factor GTPase family. EF-Tu/EF-1A subfamily. As to quaternary structure, monomer.

It localises to the cytoplasm. The enzyme catalyses GTP + H2O = GDP + phosphate + H(+). Its function is as follows. GTP hydrolase that promotes the GTP-dependent binding of aminoacyl-tRNA to the A-site of ribosomes during protein biosynthesis. The chain is Elongation factor Tu from Anaplasma phagocytophilum (strain HZ).